A 950-amino-acid chain; its full sequence is MSIGRYTRLDEIGRGSFATVYQGVHTKTRTYVAIKSVNLSKLNKKLKDNLSSEIHILKGLYHPHIVALIDCHETTSHIHLVMEYCALGDLSLFIKRRDTLGDHRYTRDMIAKYPNPPGGALNEVVVRHFLKQLASALKFLRDRNLIHRDIKPQNLLLCPSPSSYRSGVTQVVPFKGSEDSFNPATGLESLPLLKIADFGFARSLPATSLAETLCGSPLYMAPEILRYEKYDAKADLWSVGTVLYEMVVGKPPFRATNHVELLRKIEKGEDRIKFPEENPASDEIKALIRALLKRNPVERLNFPDFFENGVITSPIPGLVADDQPSIPRDPPADPETAESTPRPDSRSGAIVPGGTEREREVSYLPKGDTGLTQRPPSQNQRFGTPPTTTHMRRIGSGDRPPSTPKELTPPMTYPQRPSAVSHATAPGRQELVDRNAAFTAMERQRGRNTFSEGSPQTDRQADKLREERERAAQDVAFERDYVVVEKRAVEVNAFADELAHSPRIQGGISRGAQTGALSRRSTVHGPTPLNPSPPQATVGKAMQVLSGRSRADSMHNRQSSYERRYGQSPTSATSAISKALNMASGRLFGMGFSPPLAITKGGRSPPLAYNPFPAYPAHGSLMIGDGAKNNVALDEDTKTVQILEECATRSDVVYGFAEVKYKQLVPLAPSVQTDPSSKGNLAGERENPDSADGGLTVDAIVTLSEEALVLYVKALSLLAKSMDIAGAWWARKNRGDGFGDSAMSRADGASTLAGTRINNVVQWVRNRFNEVLEKGEFVRLKLIEAQKRLPPDHPSHPDNHSVGSSLGSGASVDVVVSPGVSAEKLMYDRALEMSRTAAINELTGEDLSGCEIAYVTAIRMLEAVLENGEVPRFGQGKDDTSKDSDKIVLDAVQAEERQVVIKLVSSIRSRLAALRKKLAILAKRAPTPSANVPSKMAPLNPVSVGATPPK.

The Protein kinase domain maps to 6–311 (YTRLDEIGRG…FPDFFENGVI (306 aa)). Residues 12 to 20 (IGRGSFATV) and lysine 35 each bind ATP. Aspartate 149 functions as the Proton acceptor in the catalytic mechanism. Disordered stretches follow at residues 314–425 (PIPG…HATA), 443–467 (RQRG…LREE), 505–570 (QGGI…QSPT), 671–690 (VQTD…NPDS), and 926–950 (PTPS…TPPK). 3 stretches are compositionally biased toward polar residues: residues 370-389 (GLTQ…PTTT), 447-458 (RNTFSEGSPQTD), and 511-520 (GAQTGALSRR). Over residues 549–565 (SRADSMHNRQSSYERRY) the composition is skewed to basic and acidic residues.

The protein belongs to the protein kinase superfamily. Ser/Thr protein kinase family. APG1/unc-51/ULK1 subfamily. As to quaternary structure, homodimer. Forms a ternary complex with ATG13 and ATG17.

It is found in the cytoplasm. The protein localises to the preautophagosomal structure membrane. It catalyses the reaction L-seryl-[protein] + ATP = O-phospho-L-seryl-[protein] + ADP + H(+). It carries out the reaction L-threonyl-[protein] + ATP = O-phospho-L-threonyl-[protein] + ADP + H(+). In terms of biological role, serine/threonine protein kinase involved in the cytoplasm to vacuole transport (Cvt) and found to be essential in autophagy, where it is required for the formation of autophagosomes. Involved in the clearance of protein aggregates which cannot be efficiently cleared by the proteasome. Required for selective autophagic degradation of the nucleus (nucleophagy) as well as for mitophagy which contributes to regulate mitochondrial quantity and quality by eliminating the mitochondria to a basal level to fulfill cellular energy requirements and preventing excess ROS production. Also involved in endoplasmic reticulum-specific autophagic process, in selective removal of ER-associated degradation (ERAD) substrates. Plays a key role in ATG9 and ATG23 cycling through the pre-autophagosomal structure and is necessary to promote ATG18 binding to ATG9 through phosphorylation of ATG9. Catalyzes phosphorylation of ATG4, decreasing the interaction between ATG4 and ATG8 and impairing deconjugation of PE-conjugated forms of ATG8. This chain is Serine/threonine-protein kinase atg1, found in Neosartorya fischeri (strain ATCC 1020 / DSM 3700 / CBS 544.65 / FGSC A1164 / JCM 1740 / NRRL 181 / WB 181) (Aspergillus fischerianus).